The chain runs to 335 residues: Eukaryotic translation initiation factor 3 subunit I (335 aa).

WD repeat units follow at residues 8 to 47 (GHERALTQIRYNKDGDIIFSTAKDQHICAWYAHNGERLGT), 50 to 91 (GHQG…KTWD), 145 to 184 (CAESKATVAGWSYMSKYIIAGHEDGSVSQYDSKTGELLFN), 189 to 228 (EPDLQVTDLQWSPDRTYFITASKDKTAKLVNARDLEVMKT), and 286 to 325 (GHFGPLNTVAVDPNGKGYASGGEDGYVRVHQFDKGYFDFT).

This sequence belongs to the eIF-3 subunit I family. Component of the eukaryotic translation initiation factor 3 (eIF-3) complex.

The protein localises to the cytoplasm. Component of the eukaryotic translation initiation factor 3 (eIF-3) complex, which is involved in protein synthesis of a specialized repertoire of mRNAs and, together with other initiation factors, stimulates binding of mRNA and methionyl-tRNAi to the 40S ribosome. The eIF-3 complex specifically targets and initiates translation of a subset of mRNAs involved in cell proliferation. The chain is Eukaryotic translation initiation factor 3 subunit I (tif34) from Sclerotinia sclerotiorum (strain ATCC 18683 / 1980 / Ss-1) (White mold).